The chain runs to 460 residues: Elongation factor 1-alpha-A (460 aa).

Glycine 2 carries the post-translational modification N,N,N-trimethylglycine. N6,N6-dimethyllysine; alternate is present on lysine 3. An N6-methyllysine; alternate modification is found at lysine 3. Residues 5–240 (KGHINVVVIG…DSIEPPARPT (236 aa)) form the tr-type G domain. Residues 14 to 21 (GHVDSGKS) are G1. 14 to 21 (GHVDSGKS) lines the GTP pocket. Residue lysine 30 is modified to N6-methyllysine. The interval 70–74 (GITID) is G2. Position 79 is an N6,N6,N6-trimethyllysine (lysine 79). The segment at 91-94 (DAPG) is G3. Residues 91–95 (DAPGH) and 153–156 (NKMD) each bind GTP. The tract at residues 153-156 (NKMD) is G4. The interval 192–194 (SGF) is G5. An N6,N6-dimethyllysine; alternate modification is found at lysine 316. Residue lysine 316 is modified to N6-methyllysine; alternate. Position 390 is an N6-methyllysine (lysine 390).

Belongs to the TRAFAC class translation factor GTPase superfamily. Classic translation factor GTPase family. EF-Tu/EF-1A subfamily.

The protein resides in the cytoplasm. Functionally, this protein promotes the GTP-dependent binding of aminoacyl-tRNA to the A-site of ribosomes during protein biosynthesis. In Schizosaccharomyces pombe (strain 972 / ATCC 24843) (Fission yeast), this protein is Elongation factor 1-alpha-A (tef101).